The chain runs to 704 residues: Myb-related protein B (704 aa).

HTH myb-type domains lie at 26–77 (RDNR…LRVL), 78–133 (NPDL…NPEV), and 134–184 (KKSC…KRKV). A DNA-binding region (H-T-H motif) is located at residues 54-77 (WKFLASHFPNRTDQQCQYRWLRVL). Lysine 104 is covalently cross-linked (Glycyl lysine isopeptide (Lys-Gly) (interchain with G-Cter in SUMO2)). DNA-binding regions (H-T-H motif) lie at residues 106 to 129 (WTLI…HNHL) and 157 to 180 (WAEI…NSTI). A Glycyl lysine isopeptide (Lys-Gly) (interchain with G-Cter in SUMO2) cross-link involves residue lysine 197. Threonine 267 carries the phosphothreonine modification. Residue lysine 275 forms a Glycyl lysine isopeptide (Lys-Gly) (interchain with G-Cter in SUMO2) linkage. Phosphoserine is present on serine 282. The tract at residues 325–412 (LSKFDLPEEP…GSGIGTPPSV (88 aa)) is disordered. Over residues 339–366 (SVVSSPVQPQTSQQQQEEALQSSQQAAT) the composition is skewed to low complexity. Serine 396 is modified (phosphoserine). A Glycyl lysine isopeptide (Lys-Gly) (interchain with G-Cter in SUMO2) cross-link involves residue lysine 414. Residues threonine 443 and threonine 447 each carry the phosphothreonine; by CDK2 modification. Residues lysine 450 and lysine 485 each participate in a glycyl lysine isopeptide (Lys-Gly) (interchain with G-Cter in SUMO2) cross-link. A phosphothreonine; by CDK2 mark is found at threonine 490 and threonine 497. Residues lysine 502 and lysine 513 each participate in a glycyl lysine isopeptide (Lys-Gly) (interchain with G-Cter in SUMO2) cross-link. Threonine 524 is modified (phosphothreonine; by CDK2). Glycyl lysine isopeptide (Lys-Gly) (interchain with G-Cter in SUMO2) cross-links involve residues lysine 527, lysine 537, and lysine 550. The residue at position 581 (serine 581) is a Phosphoserine; by CDK2. Residues lysine 588 and lysine 600 each participate in a glycyl lysine isopeptide (Lys-Gly) (interchain with G-Cter in SUMO2) cross-link. The interval 603-626 (SSTMPKPLSLPTSVTPSSCGFTSP) is disordered. A compositionally biased stretch (low complexity) spans 607–620 (PKPLSLPTSVTPSS). Residues lysine 629, lysine 643, and lysine 652 each participate in a glycyl lysine isopeptide (Lys-Gly) (interchain with G-Cter in SUMO2) cross-link.

In terms of assembly, component of the DREAM complex (also named LINC complex) at least composed of E2F4, E2F5, LIN9, LIN37, LIN52, LIN54, MYBL1, MYBL2, RBL1, RBL2, RBBP4, TFDP1 and TFDP2. The complex exists in quiescent cells where it represses cell cycle-dependent genes. It dissociates in S phase when LIN9, LIN37, LIN52 and LIN54 form a subcomplex that binds to MYBL2. Interacts with CCNF (via the Cyclin N-terminal domain). In terms of processing, phosphorylated by cyclin A/CDK2 during S-phase. Phosphorylation at Thr-524 is probably involved in transcriptional activity.

The protein resides in the nucleus. In terms of biological role, transcription factor involved in the regulation of cell survival, proliferation, and differentiation. Transactivates the expression of the CLU gene. This Mus musculus (Mouse) protein is Myb-related protein B (Mybl2).